The primary structure comprises 423 residues: UDP-N-acetylglucosamine 1-carboxyvinyltransferase 1 (423 aa).

23 to 24 (KN) lines the phosphoenolpyruvate pocket. A UDP-N-acetyl-alpha-D-glucosamine-binding site is contributed by R96. C120 acts as the Proton donor in catalysis. At C120 the chain carries 2-(S-cysteinyl)pyruvic acid O-phosphothioketal. UDP-N-acetyl-alpha-D-glucosamine is bound by residues 125–129 (RPIDL), D309, and V331.

Belongs to the EPSP synthase family. MurA subfamily.

The protein localises to the cytoplasm. It catalyses the reaction phosphoenolpyruvate + UDP-N-acetyl-alpha-D-glucosamine = UDP-N-acetyl-3-O-(1-carboxyvinyl)-alpha-D-glucosamine + phosphate. It functions in the pathway cell wall biogenesis; peptidoglycan biosynthesis. Its function is as follows. Cell wall formation. Adds enolpyruvyl to UDP-N-acetylglucosamine. The chain is UDP-N-acetylglucosamine 1-carboxyvinyltransferase 1 from Streptococcus thermophilus (strain ATCC BAA-250 / LMG 18311).